Consider the following 520-residue polypeptide: Cyclic GMP-AMP synthase-like receptor (520 aa).

Residues serine 68 and 80-82 each bind ATP; that span reads EFD. Residues glutamate 80, aspartate 82, and aspartate 198 each coordinate Mg(2+). GTP is bound at residue aspartate 198. Lysine 264 contacts ATP. Mn(2+)-binding residues include leucine 288 and aspartate 294.

This sequence belongs to the mab-21 family. Requires Mg(2+) as cofactor. It depends on Mn(2+) as a cofactor.

It carries out the reaction GTP + ATP = 2',3'-cGAMP + 2 diphosphate. It catalyses the reaction GTP + ATP = pppGp(2'-5')A + diphosphate. The enzyme catalyses pppGp(2'-5')A = 2',3'-cGAMP + diphosphate. In terms of biological role, nucleotidyltransferase that catalyzes the formation of cyclic GMP-AMP (2',3'-cGAMP) from ATP and GTP and plays a key role in innate immunity. Acts as a key sensor of double-stranded RNA (dsRNA), the presence of dsRNA in the cytoplasm being a danger signal that triggers the immune responses. Directly binds dsRNA, activating the nucleotidyltransferase activity, leading to synthesis of 2',3'-cGAMP, a second messenger that binds to and activates Sting, thereby triggering the immune response via activation of the NF-kappa-B transcription factor. This Microplitis demolitor (Parasitoid wasp) protein is Cyclic GMP-AMP synthase-like receptor.